The sequence spans 397 residues: MKKITILGSTGSIGKNTLKIISNNLDKFSVYSLVAYGNNINVLISQCIKYKPNYVCIMNKKKLLDLKQGLLKNKCKTSVLFGSNDICNLSSSKEVDIVISATVGLSGIFFLFSAIKSGKKILLANKEILVSCGHFFMKQVEKYKSIIIPIDSEHNAIFQSLPLDFQKKLGIASINKYGIYKLILTGSGGPFRNVELRDLKKVSPDQACNHPNWKMGKKISIDSATMMNKGFEYIVAKWLFNVCKDQIELIIHHQSIIHSMIRYIDGTVIANMSLPDMQSSISYGLGYPKRIKIKNKYLDFYKNNKLTFESIDYNRYPCLNLAIQASYNGQGATTVLNSANEISVSAFLSKKIYFTDIAIINKKVLDKLDIFEPSSIEEILLLDSKARNLAKKFIKCY.

T10, G11, S12, I13, N39, and N125 together coordinate NADPH. Position 126 (K126) interacts with 1-deoxy-D-xylulose 5-phosphate. Position 127 (E127) interacts with NADPH. D151 lines the Mn(2+) pocket. 4 residues coordinate 1-deoxy-D-xylulose 5-phosphate: S152, E153, S187, and H210. E153 contacts Mn(2+). G216 contacts NADPH. S223, N228, K229, and E232 together coordinate 1-deoxy-D-xylulose 5-phosphate. Residue E232 participates in Mn(2+) binding.

The protein belongs to the DXR family. Homodimer. It depends on Mg(2+) as a cofactor. Requires Mn(2+) as cofactor.

The catalysed reaction is 2-C-methyl-D-erythritol 4-phosphate + NADP(+) = 1-deoxy-D-xylulose 5-phosphate + NADPH + H(+). It participates in isoprenoid biosynthesis; isopentenyl diphosphate biosynthesis via DXP pathway; isopentenyl diphosphate from 1-deoxy-D-xylulose 5-phosphate: step 1/6. In terms of biological role, catalyzes the NADPH-dependent rearrangement and reduction of 1-deoxy-D-xylulose-5-phosphate (DXP) to 2-C-methyl-D-erythritol 4-phosphate (MEP). The polypeptide is 1-deoxy-D-xylulose 5-phosphate reductoisomerase (Wigglesworthia glossinidia brevipalpis).